Consider the following 481-residue polypeptide: DKNTYKVSGGLHGVGVSCVNALSTVLHVTVHREGKIFEQEYHRGVPQYAVREIGATTDTGTTTHFKPDGEIFTETSYNREILAGRLRELAYLNRKIRITLTDEREKDEQGNVLSEPFYSEGGIMEFVQMLDRNGRRNSLLPAPIFIEAHDAPSNVAVEVSLQYNDSFSENIFSYVNNINTIEGGTHVAGFRRAITRVFKTYGDRNKLFEKSKIEVTGDDFREGLSAIVSVKVPEPQFEGQTKTKLGNSDVMGVVDSAVADVLNAYLEEHPKEARTVINKVVLAAQAREAARKARQLVQRKSVLTGSGLPGKLADCSENDPEKCELYLVEGDSAGGTAKQGRNRAFQAILPLRGKILNVEKAMEHKIYENEEIKNIFTALGVTIGTEEDDKALNLSKLRYHKLIIMTDADVDGSHIATLILTFVFRYMKALVEQGYVYIAQPPLYLVKKGKEQIYAWTEEQRKAAVATLAGGKEDSVTIQRY.

The Toprim domain maps to 323–442 (CELYLVEGDS…QGYVYIAQPP (120 aa)). Glu-329, Asp-407, and Asp-409 together coordinate Mg(2+).

It belongs to the type II topoisomerase GyrB family. Heterotetramer, composed of two GyrA and two GyrB chains. In the heterotetramer, GyrA contains the active site tyrosine that forms a transient covalent intermediate with DNA, while GyrB binds cofactors and catalyzes ATP hydrolysis. Requires Mg(2+) as cofactor. Mn(2+) is required as a cofactor. Ca(2+) serves as cofactor.

The protein localises to the cytoplasm. It carries out the reaction ATP-dependent breakage, passage and rejoining of double-stranded DNA.. In terms of biological role, a type II topoisomerase that negatively supercoils closed circular double-stranded (ds) DNA in an ATP-dependent manner to modulate DNA topology and maintain chromosomes in an underwound state. Negative supercoiling favors strand separation, and DNA replication, transcription, recombination and repair, all of which involve strand separation. Also able to catalyze the interconversion of other topological isomers of dsDNA rings, including catenanes and knotted rings. Type II topoisomerases break and join 2 DNA strands simultaneously in an ATP-dependent manner. The polypeptide is DNA gyrase subunit B (gyrB) (Chitinophaga japonensis (Flexibacter japonensis)).